A 280-amino-acid chain; its full sequence is Golgi to ER traffic protein 2 (280 aa).

Over 1-149 the chain is Cytoplasmic; sequence MPSDREKQRI…IAYNLYQQRK (149 aa). The tract at residues 15 to 59 is disordered; that stretch reads RQAKMAKGGASDRLNKILSQGSSVKTSAVSVLDQPQPADHDPEGM. Polar residues predominate over residues 31–43; that stretch reads ILSQGSSVKTSAV. The chain crosses the membrane as a helical span at residues 150–170; sequence VRHRFLVVRMVSILANFVYHF. Topologically, residues 171-197 are lumenal; it reads LTISDFSFSPSANPFIRSIPPTSSVSS. Residues 198 to 217 traverse the membrane as a helical segment; it reads FFQIFVAIEAVLVAAYIAAS. At 218–257 the chain is on the cytoplasmic side; sequence RNVPSNNNGLLVKGISMAAMFVPKLQRFQPLIMKIIGCWD. The chain crosses the membrane as a helical span at residues 258-278; that stretch reads TVTFVLNDLGLVVLLFGLISF. Over 279-280 the chain is Lumenal; it reads RR.

The protein belongs to the GET2 family. In terms of assembly, component of the Golgi to ER traffic (GET) complex, which is composed of GET1, GET2 and GET3. Within the complex, GET1 and GET2 form a heterotetramer which is stabilized by phosphatidylinositol binding and which binds to the GET3 homodimer.

It is found in the endoplasmic reticulum membrane. It localises to the golgi apparatus membrane. Required for the post-translational delivery of tail-anchored (TA) proteins to the endoplasmic reticulum. Together with GET1, acts as a membrane receptor for soluble GET3, which recognizes and selectively binds the transmembrane domain of TA proteins in the cytosol. The GET complex cooperates with the HDEL receptor ERD2 to mediate the ATP-dependent retrieval of resident ER proteins that contain a C-terminal H-D-E-L retention signal from the Golgi to the ER. In Meyerozyma guilliermondii (strain ATCC 6260 / CBS 566 / DSM 6381 / JCM 1539 / NBRC 10279 / NRRL Y-324) (Yeast), this protein is Golgi to ER traffic protein 2.